Consider the following 74-residue polypeptide: MLVLSRKINEAIQIGADIEVKVIAVEGDQVKLGIDAPKHIDIHRKEIYLTIQEENNRAAALSSDVISALSSQKK.

The protein belongs to the CsrA/RsmA family. As to quaternary structure, homodimer. The beta-strands of each monomer intercalate to form a hydrophobic core while the alpha-helices form wings that extend away from the core. Two molecules of FliW interact with 1 homodimer. mRNA and FliW bind to different sites on CsrA.

Its subcellular location is the cytoplasm. A translational regulator that binds mRNA to regulate translation initiation and/or mRNA stability. Usually binds in the 5'-UTR at or near the Shine-Dalgarno sequence preventing ribosome-binding, thus repressing translation. Represses expression of flagellin (hag) in a post-transcriptional fashion. Specifically binds to 2 sites in the 5'-UTR of hag mRNA in a cooperative fashion; the second site overlaps the Shine-Dalgarno sequence and prevents 30S ribosomal subunit binding. Mutation of either binding site abolishes CsrA regulation of hag expression. Repression is greater in the 1A96 than 168 genetic background and higher in minimal than rich medium. Translation repression is antagonized by FliW. Partner switching by flagellin between FliW and CsrA provides a flagellar assembly checkpoint to tightly control the timing of flagellin synthesis. Flagellin binds to assembly factor FliW, freeing CsrA to repress translation of the flagellin mRNA. When the flagellar hook is assembled flagellin is secreted, depleting intracellular flagellin, which frees FliW to interact with CsrA and inhibits CsrA binding to mRNA. This derepresses flagellin translation and provides protein for flagellar assembly. Once the flagellar filament is completed cytoplasmic flagellin levels rise and CsrA translation repression of flagellin reinitiates. Overexpression leads to a dramatic reduction in motility, a significant reduction in flagellin synthesis and reduced flagella assembly. The polypeptide is Translational regulator CsrA (Bacillus subtilis (strain 168)).